The primary structure comprises 330 residues: 2-alkyl-3-oxoalkanoate reductase (330 aa).

Tyr139 acts as the Proton acceptor in catalysis. Lys143 is a binding site for NADP(+).

The protein belongs to the 3-beta-HSD family. In terms of assembly, homodimer.

It carries out the reaction a (2R,3S)-2-alkyl-3-hydroxyalkanoate + NADP(+) = an (R)-2-alkyl-3-oxoalkanoate + NADPH + H(+). In terms of biological role, involved in olefin biosynthesis. Catalyzes the reversible stereospecific NADPH-dependent reduction of 2-alkyl-3-oxoalkanoic acids to 2-alkyl-3-hydroxyalkanoic acids. In the oxidative direction, syn-2-decyl-3-hydroxytetradecanoic acid is the preferred substrate. In the reductive direction, (2R/S)-2-hexyl-3-ketodecanoic acid is accepted as substrate. The chain is 2-alkyl-3-oxoalkanoate reductase from Stenotrophomonas maltophilia (strain K279a).